The chain runs to 259 residues: 3-deoxy-manno-octulosonate cytidylyltransferase (259 aa).

The protein belongs to the KdsB family.

The protein resides in the cytoplasm. It catalyses the reaction 3-deoxy-alpha-D-manno-oct-2-ulosonate + CTP = CMP-3-deoxy-beta-D-manno-octulosonate + diphosphate. It functions in the pathway nucleotide-sugar biosynthesis; CMP-3-deoxy-D-manno-octulosonate biosynthesis; CMP-3-deoxy-D-manno-octulosonate from 3-deoxy-D-manno-octulosonate and CTP: step 1/1. Its pathway is bacterial outer membrane biogenesis; lipopolysaccharide biosynthesis. In terms of biological role, activates KDO (a required 8-carbon sugar) for incorporation into bacterial lipopolysaccharide in Gram-negative bacteria. This Alkalilimnicola ehrlichii (strain ATCC BAA-1101 / DSM 17681 / MLHE-1) protein is 3-deoxy-manno-octulosonate cytidylyltransferase.